Here is a 109-residue protein sequence, read N- to C-terminus: Flagellar hook-basal body complex protein FliE (109 aa).

This sequence belongs to the FliE family.

The protein resides in the bacterial flagellum basal body. This is Flagellar hook-basal body complex protein FliE from Nitrosomonas eutropha (strain DSM 101675 / C91 / Nm57).